Here is a 103-residue protein sequence, read N- to C-terminus: Pterin-4-alpha-carbinolamine dehydratase 2 (103 aa).

This sequence belongs to the pterin-4-alpha-carbinolamine dehydratase family. As to expression, highest level found in the kidney, liver, heart and ovarian follicles.

It carries out the reaction (4aS,6R)-4a-hydroxy-L-erythro-5,6,7,8-tetrahydrobiopterin = (6R)-L-erythro-6,7-dihydrobiopterin + H2O. Involved in tetrahydrobiopterin biosynthesis. Seems to both prevent the formation of 7-pterins and accelerate the formation of quinonoid-BH2. Its function is as follows. Regulates the dimerization of homeodomain protein HNF-1-alpha and enhances its transcriptional activity. This chain is Pterin-4-alpha-carbinolamine dehydratase 2 (PCBD2), found in Gallus gallus (Chicken).